A 284-amino-acid polypeptide reads, in one-letter code: Phosphonates import ATP-binding protein PhnC 1 (284 aa).

The region spanning 5–253 (IEVRGLSKSF…MLRDLYGSEA (249 aa)) is the ABC transporter domain. 38-45 (GASGSGKS) serves as a coordination point for ATP.

This sequence belongs to the ABC transporter superfamily. Phosphonates importer (TC 3.A.1.9.1) family. The complex is composed of two ATP-binding proteins (PhnC), two transmembrane proteins (PhnE) and a solute-binding protein (PhnD).

Its subcellular location is the cell inner membrane. It carries out the reaction phosphonate(out) + ATP + H2O = phosphonate(in) + ADP + phosphate + H(+). Part of the ABC transporter complex PhnCDE involved in phosphonates import. Responsible for energy coupling to the transport system. This is Phosphonates import ATP-binding protein PhnC 1 from Cupriavidus metallidurans (strain ATCC 43123 / DSM 2839 / NBRC 102507 / CH34) (Ralstonia metallidurans).